We begin with the raw amino-acid sequence, 713 residues long: DNA polymerase eta (713 aa).

The region spanning 9–259 (VALVDMDCFF…MPIRKIRSLG (251 aa)) is the UmuC domain. Mg(2+) is bound by residues aspartate 13 and methionine 14. Positions 13 and 14 each coordinate Mn(2+). Arginine 61 provides a ligand contact to a 2'-deoxyribonucleoside 5'-triphosphate. Positions 115 and 116 each coordinate Mg(2+). Mn(2+)-binding residues include aspartate 115 and glutamate 116. Disordered regions lie at residues 441 to 472 (TSFL…AVTA) and 495 to 527 (EASL…QSTG). Composition is skewed to polar residues over residues 456 to 466 (VTSSEAKTQGS) and 497 to 527 (SLSS…QSTG). A UBZ3-type zinc finger spans residues 628–662 (AAEDQVPCEKCGSLVPVWDMPEHMDYHFALELQKS). Zn(2+)-binding residues include cysteine 635, cysteine 638, histidine 650, and histidine 654. Residues 677–705 (VSHQGKRNPKSPLACTNKRPRPEGMQTLE) are disordered. Glycyl lysine isopeptide (Lys-Gly) (interchain with G-Cter in ubiquitin) cross-links involve residues lysine 682, lysine 686, and lysine 694. The short motif at 701-708 (MQTLESFF) is the PIP-box element. A Glycyl lysine isopeptide (Lys-Gly) (interchain with G-Cter in ubiquitin) cross-link involves residue lysine 709.

It belongs to the DNA polymerase type-Y family. In terms of assembly, interacts with REV1. Interacts with monoubiquitinated PCNA, but not unmodified PCNA. Interacts with POLI; this interaction targets POLI to the replication machinery. Interacts with PALB2 and BRCA2; the interactions are direct and are required to sustain the recruitment of POLH at blocked replication forks and to stimulate POLH-dependent DNA synthesis on D loop substrates. Interacts (via C-terminus) with TRAIP. Interacts with ubiquitin. Interacts with POLDIP2. The cofactor is Mg(2+). Requires Mn(2+) as cofactor. Post-translationally, monoubiquitinated by RCHY1/PIRH2. Ubiquitination depends on integrity of the UBZ3-type zinc finger domain and is enhanced by TRAIP. Ubiquitination inhibits the ability of PolH to interact with PCNA and to bypass UV-induced lesions.

It is found in the nucleus. It carries out the reaction DNA(n) + a 2'-deoxyribonucleoside 5'-triphosphate = DNA(n+1) + diphosphate. With respect to regulation, the enzyme in complex with the DNA substrate binds a third divalent metal cation. The binding of this third divalent cation, which is coordinated by water molecules and two oxygen atoms from DNA and dNTP, is essential for catalyzing the DNA synthesis. DNA polymerase specifically involved in the DNA repair by translesion synthesis (TLS). Due to low processivity on both damaged and normal DNA, cooperates with the heterotetrameric (REV3L, REV7, POLD2 and POLD3) POLZ complex for complete bypass of DNA lesions. Inserts one or 2 nucleotide(s) opposite the lesion, the primer is further extended by the tetrameric POLZ complex. In the case of 1,2-intrastrand d(GpG)-cisplatin cross-link, inserts dCTP opposite the 3' guanine. Particularly important for the repair of UV-induced pyrimidine dimers. Although inserts the correct base, may cause base transitions and transversions depending upon the context. May play a role in hypermutation at immunoglobulin genes. Forms a Schiff base with 5'-deoxyribose phosphate at abasic sites, but does not have any lyase activity, preventing the release of the 5'-deoxyribose phosphate (5'-dRP) residue. This covalent trapping of the enzyme by the 5'-dRP residue inhibits its DNA synthetic activity during base excision repair, thereby avoiding high incidence of mutagenesis. Targets POLI to replication foci. In Homo sapiens (Human), this protein is DNA polymerase eta (POLH).